Reading from the N-terminus, the 196-residue chain is ATP-dependent Clp protease proteolytic subunit (196 aa).

Residue Ser98 is the Nucleophile of the active site. The active site involves His123.

The protein belongs to the peptidase S14 family. In terms of assembly, fourteen ClpP subunits assemble into 2 heptameric rings which stack back to back to give a disk-like structure with a central cavity, resembling the structure of eukaryotic proteasomes.

It is found in the cytoplasm. It catalyses the reaction Hydrolysis of proteins to small peptides in the presence of ATP and magnesium. alpha-casein is the usual test substrate. In the absence of ATP, only oligopeptides shorter than five residues are hydrolyzed (such as succinyl-Leu-Tyr-|-NHMec, and Leu-Tyr-Leu-|-Tyr-Trp, in which cleavage of the -Tyr-|-Leu- and -Tyr-|-Trp bonds also occurs).. Its function is as follows. Cleaves peptides in various proteins in a process that requires ATP hydrolysis. Has a chymotrypsin-like activity. Plays a major role in the degradation of misfolded proteins. The protein is ATP-dependent Clp protease proteolytic subunit of Geobacillus thermodenitrificans (strain NG80-2).